The primary structure comprises 86 residues: Large ribosomal subunit protein eL20 (86 aa).

Belongs to the eukaryotic ribosomal protein eL20 family. Part of the 50S ribosomal subunit. Binds 23S rRNA.

The protein is Large ribosomal subunit protein eL20 of Metallosphaera sedula (strain ATCC 51363 / DSM 5348 / JCM 9185 / NBRC 15509 / TH2).